We begin with the raw amino-acid sequence, 201 residues long: Holliday junction branch migration complex subunit RuvA (201 aa).

The tract at residues 1-64 (MFAYIKGVLA…EFSHTLYGFL (64 aa)) is domain I. The domain II stretch occupies residues 65–143 (SYQERDIFEI…AIGHLDTSDH (79 aa)). The tract at residues 144–153 (IEPLTQDPKS) is flexible linker. Residues 153–201 (SKSVQDAMLALINLGYNQTTAQKAIKQGMKELPEEIDLAQLITVALKHV) are domain III.

The protein belongs to the RuvA family. Homotetramer. Forms an RuvA(8)-RuvB(12)-Holliday junction (HJ) complex. HJ DNA is sandwiched between 2 RuvA tetramers; dsDNA enters through RuvA and exits via RuvB. An RuvB hexamer assembles on each DNA strand where it exits the tetramer. Each RuvB hexamer is contacted by two RuvA subunits (via domain III) on 2 adjacent RuvB subunits; this complex drives branch migration. In the full resolvosome a probable DNA-RuvA(4)-RuvB(12)-RuvC(2) complex forms which resolves the HJ.

Its subcellular location is the cytoplasm. The RuvA-RuvB-RuvC complex processes Holliday junction (HJ) DNA during genetic recombination and DNA repair, while the RuvA-RuvB complex plays an important role in the rescue of blocked DNA replication forks via replication fork reversal (RFR). RuvA specifically binds to HJ cruciform DNA, conferring on it an open structure. The RuvB hexamer acts as an ATP-dependent pump, pulling dsDNA into and through the RuvAB complex. HJ branch migration allows RuvC to scan DNA until it finds its consensus sequence, where it cleaves and resolves the cruciform DNA. The polypeptide is Holliday junction branch migration complex subunit RuvA (Protochlamydia amoebophila (strain UWE25)).